The chain runs to 592 residues: MSDITEKTAEQLENLQINDDQQPAQSASAPSTSASESEASSVSKVENNNASLYVGELDPNITEALLYDVFSPLGPISSIRVCRDAVTKASLGYAYVNYTDYEAGKKAIQELNYAEINGRPCRIMWSERDPAIRKKGSGNIFIKNLHPAIDNKALHETFSTFGEVLSCKVALDENGNSRGFGFVHFKEESDAKDAIEAVNGMLMNGLEVYVAMHVPKKDRISKLEEAKANFTNIYVKNIDVETTDEEFEQLFSQYGEIVSAALEKDAEGKPKGFGFVNFVDHNAAAKAVEELNGKEFKSQALYVGRAQKKYERAEELKKQYEQYRLEKLAKFQGVNLFIKNLDDSIDDEKLKEEFAPYGTITSARVMRDQEGNSKGFGFVCFSSPEEATKAMTEKNQQIVAGKPLYVAIAQRKDVRRSQLAQQIQARNQIRFQQQQQQQAAAAAAGMPGQYMPQMFYGVMAPRGFPGPNPGMNGPMGAGIPKNGMVPPPQQFAGRPNGPMYQGMPPQNQFPRHQQQHYIQQQKQRQALGEQLYKKVSAKIDDENAAGKITGMILDLPPQQVIQLLDNDEQFEQQFQEALAAYENFKKEQEAQA.

Residues 1–10 (MSDITEKTAE) are compositionally biased toward basic and acidic residues. The tract at residues 1–43 (MSDITEKTAEQLENLQINDDQQPAQSASAPSTSASESEASSVS) is disordered. Polar residues predominate over residues 11–20 (QLENLQINDD). Residues 21–43 (QQPAQSASAPSTSASESEASSVS) are compositionally biased toward low complexity. RRM domains lie at 50–128 (ASLY…WSER), 138–215 (GNIF…MHVP), 231–308 (TNIY…RAQK), and 334–411 (VNLF…IAQR). The region spanning 507-586 (NQFPRHQQQH…ALAAYENFKK (80 aa)) is the PABC domain.

This sequence belongs to the polyadenylate-binding protein type-1 family.

It localises to the cytoplasm. It is found in the nucleus. Functionally, binds the poly(A) tail of mRNA. Appears to be an important mediator of the multiple roles of the poly(A) tail in mRNA biogenesis, stability and translation. In the nucleus, involved in both mRNA cleavage and polyadenylation. Is also required for efficient mRNA export to the cytoplasm. Acts in concert with a poly(A)-specific nuclease (PAN) to affect poly(A) tail shortening, which may occur concomitantly with either nucleocytoplasmic mRNA transport or translational initiation. In the cytoplasm, stimulates translation initiation and regulates mRNA decay through translation termination-coupled poly(A) shortening, probably mediated by PAN. This is Polyadenylate-binding protein, cytoplasmic and nuclear (PAB1) from Kluyveromyces lactis (strain ATCC 8585 / CBS 2359 / DSM 70799 / NBRC 1267 / NRRL Y-1140 / WM37) (Yeast).